Consider the following 495-residue polypeptide: DNA-directed RNA polymerase subunit alpha (495 aa).

The segment at 1-301 (MPYIKHIETK…RMLASLQAPP (301 aa)) is alpha N-terminal domain (alpha-NTD). 2 disordered regions span residues 159-227 (SLVP…EAPH) and 391-495 (QEQV…PEET). The tract at residues 170–237 (PRDPLEPEND…IPSMRDDHMT (68 aa)) is insert. Basic and acidic residues predominate over residues 172 to 186 (DPLEPENDSKSETKS). Composition is skewed to polar residues over residues 207 to 219 (VNAQ…SNST) and 391 to 403 (QEQV…SQIA). An alpha C-terminal domain (alpha-CTD) region spans residues 317 to 495 (AKEIALTPIE…LSSSQNPEET (179 aa)). Over residues 417-426 (RPIDSKETRR) the composition is skewed to basic and acidic residues. Residues 444 to 453 (RKSSKTKVKA) show a composition bias toward basic residues. Polar residues-rich tracts occupy residues 464 to 473 (KSANLQQAEE) and 486 to 495 (LSSSQNPEET).

The protein belongs to the RNA polymerase alpha chain family. In plastids the minimal PEP RNA polymerase catalytic core is composed of four subunits: alpha, beta, beta', and beta''. When a (nuclear-encoded) sigma factor is associated with the core the holoenzyme is formed, which can initiate transcription.

The protein resides in the plastid. It is found in the chloroplast. It carries out the reaction RNA(n) + a ribonucleoside 5'-triphosphate = RNA(n+1) + diphosphate. Functionally, DNA-dependent RNA polymerase catalyzes the transcription of DNA into RNA using the four ribonucleoside triphosphates as substrates. This is DNA-directed RNA polymerase subunit alpha from Nephroselmis olivacea (Green alga).